A 224-amino-acid polypeptide reads, in one-letter code: Orotate phosphoribosyltransferase (224 aa).

Lys-29 is a 5-phospho-alpha-D-ribose 1-diphosphate binding site. An orotate-binding site is contributed by 37–38 (FF). Residues 75–76 (YK), Arg-105, Lys-106, Lys-109, His-111, and 130–138 (DDVITAGTS) contribute to the 5-phospho-alpha-D-ribose 1-diphosphate site. Positions 134 and 162 each coordinate orotate.

Belongs to the purine/pyrimidine phosphoribosyltransferase family. PyrE subfamily. In terms of assembly, homodimer. It depends on Mg(2+) as a cofactor.

The catalysed reaction is orotidine 5'-phosphate + diphosphate = orotate + 5-phospho-alpha-D-ribose 1-diphosphate. Its pathway is pyrimidine metabolism; UMP biosynthesis via de novo pathway; UMP from orotate: step 1/2. In terms of biological role, catalyzes the transfer of a ribosyl phosphate group from 5-phosphoribose 1-diphosphate to orotate, leading to the formation of orotidine monophosphate (OMP). The chain is Orotate phosphoribosyltransferase from Bordetella parapertussis (strain 12822 / ATCC BAA-587 / NCTC 13253).